The chain runs to 500 residues: NAD(P)H-quinone oxidoreductase chain 4, chloroplastic (500 aa).

A run of 14 helical transmembrane segments spans residues 4-24 (FPWL…IFFL), 37-57 (ISIC…HFQL), 87-107 (LGSI…AWPI), 113-130 (LFYF…GLFS), 134-154 (LLLF…LLSM), 167-187 (FILY…GMGL), 211-231 (ILLY…IPLH), 242-262 (HYST…YGLI), 272-292 (AHYL…IYAA), 313-333 (MGFI…GAIL), 334-354 (QILS…TASD), 386-406 (LALP…GLIT), 417-437 (LITF…LSML), and 462-482 (LFIL…PDFV).

This sequence belongs to the complex I subunit 4 family.

The protein localises to the plastid. It is found in the chloroplast thylakoid membrane. It catalyses the reaction a plastoquinone + NADH + (n+1) H(+)(in) = a plastoquinol + NAD(+) + n H(+)(out). The enzyme catalyses a plastoquinone + NADPH + (n+1) H(+)(in) = a plastoquinol + NADP(+) + n H(+)(out). This is NAD(P)H-quinone oxidoreductase chain 4, chloroplastic (ndhD) from Triticum aestivum (Wheat).